Reading from the N-terminus, the 337-residue chain is Ribosomal RNA small subunit methyltransferase H (337 aa).

Residues 45–47, Asp64, Phe91, Asp120, and Gln127 each bind S-adenosyl-L-methionine; that span reads GGH.

Belongs to the methyltransferase superfamily. RsmH family.

Its subcellular location is the cytoplasm. It carries out the reaction cytidine(1402) in 16S rRNA + S-adenosyl-L-methionine = N(4)-methylcytidine(1402) in 16S rRNA + S-adenosyl-L-homocysteine + H(+). In terms of biological role, specifically methylates the N4 position of cytidine in position 1402 (C1402) of 16S rRNA. This is Ribosomal RNA small subunit methyltransferase H from Corynebacterium glutamicum (strain ATCC 13032 / DSM 20300 / JCM 1318 / BCRC 11384 / CCUG 27702 / LMG 3730 / NBRC 12168 / NCIMB 10025 / NRRL B-2784 / 534).